A 135-amino-acid chain; its full sequence is MRIFTRLLYAAPSNMGSAASLSEALALLPPIPLYRRILRVHRKKLDPEMRILGDSYVKSEFRAHRGTENPLHIIGFLTEWQLYAQKLEGDSWIGEKLDQGKLDKMSDQQLGQLYELMQTIQNKDGKGEGEGESEK.

The N-terminal 12 residues, 1-12 (MRIFTRLLYAAP), are a transit peptide targeting the mitochondrion.

Belongs to the complex I LYR family. SDHAF3 subfamily. In terms of assembly, interacts with the iron-sulfur protein subunit within the SDH catalytic dimer.

It is found in the mitochondrion matrix. Plays an essential role in the assembly of succinate dehydrogenase (SDH), an enzyme complex (also referred to as respiratory complex II) that is a component of both the tricarboxylic acid (TCA) cycle and the mitochondrial electron transport chain, and which couples the oxidation of succinate to fumarate with the reduction of ubiquinone (coenzyme Q) to ubiquinol. Promotes maturation of the iron-sulfur protein subunit of the SDH catalytic dimer, protecting it from the deleterious effects of oxidants. May act together with SDHAF1. The chain is Succinate dehydrogenase assembly factor 3, mitochondrial from Emericella nidulans (strain FGSC A4 / ATCC 38163 / CBS 112.46 / NRRL 194 / M139) (Aspergillus nidulans).